We begin with the raw amino-acid sequence, 181 residues long: uncharacterized protein (181 aa).

2 helical membrane-spanning segments follow: residues 24–46 (IAAVLISTSFVLFGFLALVLLNV) and 55–77 (GIVAIVSLIAIWVLMTAGVYILL).

Its subcellular location is the cell membrane. This is an uncharacterized protein from Archaeoglobus fulgidus (strain ATCC 49558 / DSM 4304 / JCM 9628 / NBRC 100126 / VC-16).